The following is a 186-amino-acid chain: Small ribosomal subunit protein uS5 (186 aa).

An S5 DRBM domain is found at 20–83 (FVDKLVHINR…EAAKRDMIFV (64 aa)).

This sequence belongs to the universal ribosomal protein uS5 family. Part of the 30S ribosomal subunit. Contacts proteins S4 and S8.

Its function is as follows. With S4 and S12 plays an important role in translational accuracy. Functionally, located at the back of the 30S subunit body where it stabilizes the conformation of the head with respect to the body. The sequence is that of Small ribosomal subunit protein uS5 from Brucella ovis (strain ATCC 25840 / 63/290 / NCTC 10512).